The following is a 218-amino-acid chain: Small ribosomal subunit protein uS3c (218 aa).

Residues 47 to 118 (VQKNMRTSSG…KLNIAVTRIA (72 aa)) enclose the KH type-2 domain.

Belongs to the universal ribosomal protein uS3 family. In terms of assembly, part of the 30S ribosomal subunit.

Its subcellular location is the plastid. The protein localises to the chloroplast. In Atropa belladonna (Belladonna), this protein is Small ribosomal subunit protein uS3c (rps3).